A 126-amino-acid chain; its full sequence is Fluoride-specific ion channel FluC (126 aa).

4 consecutive transmembrane segments (helical) span residues 3–23 (PYLL…RFLI), 37–57 (VGTL…ALYF), 68–88 (LVIT…LETV), and 101–121 (TNIT…MMLF). Positions 75 and 78 each coordinate Na(+).

The protein belongs to the fluoride channel Fluc/FEX (TC 1.A.43) family.

The protein localises to the cell inner membrane. The enzyme catalyses fluoride(in) = fluoride(out). Its activity is regulated as follows. Na(+) is not transported, but it plays an essential structural role and its presence is essential for fluoride channel function. Its function is as follows. Fluoride-specific ion channel. Important for reducing fluoride concentration in the cell, thus reducing its toxicity. This Sulfurovum sp. (strain NBC37-1) protein is Fluoride-specific ion channel FluC.